Reading from the N-terminus, the 120-residue chain is Large ribosomal subunit protein bL17 (120 aa).

It belongs to the bacterial ribosomal protein bL17 family. Part of the 50S ribosomal subunit. Contacts protein L32.

The polypeptide is Large ribosomal subunit protein bL17 (Bacillus licheniformis (strain ATCC 14580 / DSM 13 / JCM 2505 / CCUG 7422 / NBRC 12200 / NCIMB 9375 / NCTC 10341 / NRRL NRS-1264 / Gibson 46)).